The primary structure comprises 753 residues: 5-methyltetrahydropteroyltriglutamate--homocysteine methyltransferase (753 aa).

5-methyltetrahydropteroyltri-L-glutamate contacts are provided by residues 17–20 (RELK) and lysine 117. L-homocysteine is bound by residues 431-433 (IGS) and glutamate 484. Residues 431-433 (IGS) and glutamate 484 contribute to the L-methionine site. 5-methyltetrahydropteroyltri-L-glutamate contacts are provided by residues 515–516 (RC) and tryptophan 561. Residue aspartate 599 coordinates L-homocysteine. Residue aspartate 599 participates in L-methionine binding. Glutamate 605 provides a ligand contact to 5-methyltetrahydropteroyltri-L-glutamate. Zn(2+) is bound by residues histidine 641, cysteine 643, and glutamate 665. Histidine 694 (proton donor) is an active-site residue. Cysteine 726 provides a ligand contact to Zn(2+).

Belongs to the vitamin-B12 independent methionine synthase family. Requires Zn(2+) as cofactor.

It carries out the reaction 5-methyltetrahydropteroyltri-L-glutamate + L-homocysteine = tetrahydropteroyltri-L-glutamate + L-methionine. Its pathway is amino-acid biosynthesis; L-methionine biosynthesis via de novo pathway; L-methionine from L-homocysteine (MetE route): step 1/1. In terms of biological role, catalyzes the transfer of a methyl group from 5-methyltetrahydrofolate to homocysteine resulting in methionine formation. In Cronobacter sakazakii (strain ATCC BAA-894) (Enterobacter sakazakii), this protein is 5-methyltetrahydropteroyltriglutamate--homocysteine methyltransferase.